Here is a 1382-residue protein sequence, read N- to C-terminus: DNA-directed RNA polymerase subunit beta' (1382 aa).

Zn(2+)-binding residues include C70, C72, C85, and C88. D460, D462, and D464 together coordinate Mg(2+). Residues C808, C882, C889, and C892 each coordinate Zn(2+).

It belongs to the RNA polymerase beta' chain family. In terms of assembly, the RNAP catalytic core consists of 2 alpha, 1 beta, 1 beta' and 1 omega subunit. When a sigma factor is associated with the core the holoenzyme is formed, which can initiate transcription. The cofactor is Mg(2+). Zn(2+) is required as a cofactor.

It catalyses the reaction RNA(n) + a ribonucleoside 5'-triphosphate = RNA(n+1) + diphosphate. In terms of biological role, DNA-dependent RNA polymerase catalyzes the transcription of DNA into RNA using the four ribonucleoside triphosphates as substrates. The protein is DNA-directed RNA polymerase subunit beta' of Citrifermentans bemidjiense (strain ATCC BAA-1014 / DSM 16622 / JCM 12645 / Bem) (Geobacter bemidjiensis).